Reading from the N-terminus, the 238-residue chain is Probable solute-binding protein AdeT2 (238 aa).

Belongs to the bacterial solute-binding protein 7 family.

Its function is as follows. Mediates antimicrobial resistance via active efflux. Contributes to resistance to antibiotics such as chloramphenicol, erythromycin and novobiocin. May be part of a tripartite ATP-independent periplasmic (TRAP) transport system. The sequence is that of Probable solute-binding protein AdeT2 from Acinetobacter baumannii.